A 178-amino-acid polypeptide reads, in one-letter code: Cytochrome b6-f complex iron-sulfur subunit (178 aa).

Residues 20 to 42 (LLTFGTATGVALGALYPVANYFM) traverse the membrane as a helical segment. In terms of domain architecture, Rieske spans 65-161 (KTGWLANHQA…VDVDDDAVLV (97 aa)). [2Fe-2S] cluster is bound by residues C107, H109, C125, and H128. A disulfide bridge links C112 with C127.

It belongs to the Rieske iron-sulfur protein family. In terms of assembly, the 4 large subunits of the cytochrome b6-f complex are cytochrome b6, subunit IV (17 kDa polypeptide, PetD), cytochrome f and the Rieske protein, while the 4 small subunits are PetG, PetL, PetM and PetN. The complex functions as a dimer. It depends on [2Fe-2S] cluster as a cofactor.

Its subcellular location is the cellular thylakoid membrane. It catalyses the reaction 2 oxidized [plastocyanin] + a plastoquinol + 2 H(+)(in) = 2 reduced [plastocyanin] + a plastoquinone + 4 H(+)(out). Functionally, component of the cytochrome b6-f complex, which mediates electron transfer between photosystem II (PSII) and photosystem I (PSI), cyclic electron flow around PSI, and state transitions. In Prochlorococcus marinus (strain MIT 9515), this protein is Cytochrome b6-f complex iron-sulfur subunit.